A 485-amino-acid chain; its full sequence is Protein disulfide isomerase-like 5-4 (485 aa).

Positions 114–263 (VPTGSEFHPG…LVAAMETYVA (150 aa)) constitute a Thioredoxin domain. The active-site Nucleophile is cysteine 170. A helical transmembrane segment spans residues 444-464 (FSHFITNVCAIIGGVFTVAGI).

Belongs to the protein disulfide isomerase family.

Its subcellular location is the membrane. Functionally, acts as a protein-folding catalyst that interacts with nascent polypeptides to catalyze the formation, isomerization, and reduction or oxidation of disulfide bonds. May play a role in storage protein biogenesis. In Oryza sativa subsp. japonica (Rice), this protein is Protein disulfide isomerase-like 5-4 (PDIL5-4).